We begin with the raw amino-acid sequence, 367 residues long: Chorismate synthase (367 aa).

Arg48 contacts NADP(+). Residues 125 to 127 (RSS), 241 to 242 (NA), Gly285, 300 to 304 (KPTSS), and Arg326 each bind FMN.

It belongs to the chorismate synthase family. Homotetramer. FMNH2 is required as a cofactor.

It carries out the reaction 5-O-(1-carboxyvinyl)-3-phosphoshikimate = chorismate + phosphate. It participates in metabolic intermediate biosynthesis; chorismate biosynthesis; chorismate from D-erythrose 4-phosphate and phosphoenolpyruvate: step 7/7. Its function is as follows. Catalyzes the anti-1,4-elimination of the C-3 phosphate and the C-6 proR hydrogen from 5-enolpyruvylshikimate-3-phosphate (EPSP) to yield chorismate, which is the branch point compound that serves as the starting substrate for the three terminal pathways of aromatic amino acid biosynthesis. This reaction introduces a second double bond into the aromatic ring system. This chain is Chorismate synthase, found in Dinoroseobacter shibae (strain DSM 16493 / NCIMB 14021 / DFL 12).